The primary structure comprises 236 residues: Small ribosomal subunit protein eS6 (236 aa).

2 positions are modified to phosphoserine: S232 and S233.

It belongs to the eukaryotic ribosomal protein eS6 family. Post-translationally, phosphorylated.

The polypeptide is Small ribosomal subunit protein eS6 (RPS6) (Debaryomyces hansenii (strain ATCC 36239 / CBS 767 / BCRC 21394 / JCM 1990 / NBRC 0083 / IGC 2968) (Yeast)).